Here is a 155-residue protein sequence, read N- to C-terminus: Small ribosomal subunit protein uS7 (155 aa).

This sequence belongs to the universal ribosomal protein uS7 family. In terms of assembly, part of the 30S ribosomal subunit. Contacts proteins S9 and S11.

In terms of biological role, one of the primary rRNA binding proteins, it binds directly to 16S rRNA where it nucleates assembly of the head domain of the 30S subunit. Is located at the subunit interface close to the decoding center, probably blocks exit of the E-site tRNA. The sequence is that of Small ribosomal subunit protein uS7 from Lactococcus lactis subsp. lactis (strain IL1403) (Streptococcus lactis).